A 1448-amino-acid polypeptide reads, in one-letter code: Glutamate receptor ionotropic, NMDA 2B (1448 aa).

The signal sequence occupies residues 1–24 (MRPTEACCYLKISLIILFYMGCYA). Over 25–554 (QKHPNMDIAV…SAFLEPFSAD (530 aa)) the chain is Extracellular. Cys-81 and Cys-316 form a disulfide bridge. His-122 and Glu-279 together coordinate Zn(2+). N-linked (GlcNAc...) asparagine glycosylation is present at Asn-336. Cystine bridges form between Cys-426/Cys-453 and Cys-433/Cys-454. L-glutamate is bound by residues Thr-511 and Arg-516. Residues 555–573 (VWVMMFVMLLIVSAVAVFV) form a helical membrane-spanning segment. Topologically, residues 574 to 600 (FEYFSPVGYNRCLADGREPGGPSFTIG) are cytoplasmic. Residues 601-620 (KAIWLLWGLVFNNSVPVQNP) constitute an intramembrane region (discontinuously helical). A pore-forming region spans residues 601–620 (KAIWLLWGLVFNNSVPVQNP). Topologically, residues 621–627 (KGTTSKI) are cytoplasmic. A helical membrane pass occupies residues 628–643 (MVSVWAFFAVIFLASY). Over 644–819 (TANLAAFMIQ…LDIDNMAGVF (176 aa)) the chain is Extracellular. Residue Asn-685 is glycosylated (N-linked (GlcNAc...) asparagine). Residues 687-688 (ST) and Asp-729 contribute to the L-glutamate site. Cysteines 743 and 798 form a disulfide. A helical transmembrane segment spans residues 820 to 839 (YMLAAAMALSLITFIMEHLF). Over 840–1448 (FWQLRHCFMG…EKLSSIESDV (609 aa)) the chain is Cytoplasmic. Positions 1254–1265 (APNSKYPQSPNG) are enriched in polar residues. Residues 1254 to 1277 (APNSKYPQSPNGKAQKRNRSKLHR) form a disordered region. Over residues 1267 to 1277 (AQKRNRSKLHR) the composition is skewed to basic residues.

It belongs to the glutamate-gated ion channel (TC 1.A.10.1) family. NR2B/GRIN2B subfamily. Heterotetramer. Forms heterotetrameric channels composed of two GluN1/zeta subunits (GRIN1), and two identical GluN2/epsilon subunits (GRIN2A, GRIN2B, GRIN2C or GRIN2D) or GluN3 subunits (GRIN3A or GRIN3B) (in vitro). In vivo, the subunit composition may depend on the expression levels of the different subunits. Detected in oocytes.

It localises to the cell membrane. Its subcellular location is the postsynaptic cell membrane. It carries out the reaction Ca(2+)(in) = Ca(2+)(out). It catalyses the reaction Na(+)(in) = Na(+)(out). The catalysed reaction is K(+)(in) = K(+)(out). Its function is as follows. Component of N-methyl-D-aspartate (NMDA) receptors (NMDARs) that function as heterotetrameric, ligand-gated cation channels with high calcium permeability and voltage-dependent block by Mg(2+). Channel activation requires binding of the neurotransmitter L-glutamate to the GluN2 subunit, glycine binding to the GluN1 subunit, plus membrane depolarization to eliminate channel inhibition by Mg(2+). NMDARs mediate simultaneously the potasium efflux and the influx of calcium and sodium. Each GluN2 subunit confers differential attributes to channel properties, including activation, deactivation and desensitization kinetics, pH sensitivity, Ca2(+) permeability, and binding to allosteric modulators. The sequence is that of Glutamate receptor ionotropic, NMDA 2B from Xenopus laevis (African clawed frog).